Consider the following 435-residue polypeptide: E3 ubiquitin-protein ligase RING1 (435 aa).

The segment at 46 to 86 (CPICLDMLKKTMTTKECLHRFCSDCIVTALRSGNKECPTCR) adopts an RING-type zinc-finger fold. The interval 144-322 (KLQSQNRPQR…TEGEGNGELG (179 aa)) is disordered. Residues 157–170 (KGGGGGGGGGGNGN) show a composition bias toward gly residues. Composition is skewed to low complexity over residues 171-188 (GAAN…TAVG), 202-211 (SNDSNSNTNS), 222-251 (SGTS…TSAT), and 259-278 (SNPP…SSSS). Serine 202 is modified (phosphoserine). Residue serine 266 is modified to Phosphoserine. Threonine 267 bears the Phosphothreonine mark. Residue serine 269 is modified to Phosphoserine. A compositionally biased stretch (acidic residues) spans 309-322 (SNIDTEGEGNGELG).

In terms of assembly, interacts with ORD. Component of PRC1 complex, which contains many PcG proteins like Pc, ph, Scm, Psc, Sce and also chromatin remodeling proteins such as histone deacetylases. This complex is distinct from the Esc/E(z) complex, at least composed of esc, E(z), Su(z)12, HDAC1/Rpd3 and Caf1-55. The two complexes however cooperate and interact together during the first 3 hours of development to establish PcG silencing. In terms of tissue distribution, ubiquitously expressed in syncytial blastoderm embryos. Ubiquitously expressed until stage 11. Then, it is only expressed in the neuroectoderm. Later in embryonic development, it is only expressed in the CNS. In larvae, it is expressed in all imaginal disks. Expressed in the male and female gonads.

The protein resides in the nucleus. It is found in the chromosome. It catalyses the reaction S-ubiquitinyl-[E2 ubiquitin-conjugating enzyme]-L-cysteine + [acceptor protein]-L-lysine = [E2 ubiquitin-conjugating enzyme]-L-cysteine + N(6)-ubiquitinyl-[acceptor protein]-L-lysine.. It functions in the pathway protein modification; protein ubiquitination. Functionally, E3 ubiquitin-protein ligase that mediates monoubiquitination of 'Lys-118' of histone H2A, thereby playing a central role in histone code and gene regulation. H2A 'Lys-118' ubiquitination gives a specific tag for epigenetic transcriptional repression. Polycomb group (PcG) protein. PcG proteins act by forming multiprotein complexes, which are required to maintain the transcriptionally repressive state of homeotic genes throughout development. PcG proteins are not required to initiate repression, but to maintain it during later stages of development. PcG complexes act via modification of histones, such as methylation, deacetylation, ubiquitination rendering chromatin heritably changed in its expressibility. May play a role in meiotic sister chromatid cohesion. The protein is E3 ubiquitin-protein ligase RING1 (Sce) of Drosophila melanogaster (Fruit fly).